We begin with the raw amino-acid sequence, 447 residues long: N-succinylarginine dihydrolase (447 aa).

Substrate is bound by residues 19 to 28 (AGLSFGNEAS), Asn-110, and 137 to 138 (HR). Glu-174 is an active-site residue. Residue Arg-212 coordinates substrate. Residue His-248 is part of the active site. Asp-250 and Asn-359 together coordinate substrate. The active-site Nucleophile is Cys-365.

It belongs to the succinylarginine dihydrolase family. Homodimer.

The catalysed reaction is N(2)-succinyl-L-arginine + 2 H2O + 2 H(+) = N(2)-succinyl-L-ornithine + 2 NH4(+) + CO2. It participates in amino-acid degradation; L-arginine degradation via AST pathway; L-glutamate and succinate from L-arginine: step 2/5. In terms of biological role, catalyzes the hydrolysis of N(2)-succinylarginine into N(2)-succinylornithine, ammonia and CO(2). The protein is N-succinylarginine dihydrolase of Escherichia coli (strain SMS-3-5 / SECEC).